A 75-amino-acid polypeptide reads, in one-letter code: uncharacterized protein (75 aa).

This is an uncharacterized protein from Methanocaldococcus jannaschii (strain ATCC 43067 / DSM 2661 / JAL-1 / JCM 10045 / NBRC 100440) (Methanococcus jannaschii).